We begin with the raw amino-acid sequence, 268 residues long: Indole-3-glycerol phosphate synthase (268 aa).

Belongs to the TrpC family.

It carries out the reaction 1-(2-carboxyphenylamino)-1-deoxy-D-ribulose 5-phosphate + H(+) = (1S,2R)-1-C-(indol-3-yl)glycerol 3-phosphate + CO2 + H2O. The protein operates within amino-acid biosynthesis; L-tryptophan biosynthesis; L-tryptophan from chorismate: step 4/5. The protein is Indole-3-glycerol phosphate synthase of Parafrankia sp. (strain EAN1pec).